A 374-amino-acid chain; its full sequence is Pectate lyase 3 (374 aa).

The first 22 residues, 1–22, serve as a signal peptide directing secretion; it reads MKYLLPSAAAGLLLLAAQPTMA. Cysteines 93 and 176 form a disulfide. Ca(2+)-binding residues include aspartate 150, aspartate 152, glutamate 187, and aspartate 191. Residue arginine 239 is part of the active site. The cysteines at positions 350 and 373 are disulfide-linked.

It belongs to the polysaccharide lyase 1 family. PLADES subfamily. It depends on Ca(2+) as a cofactor.

It localises to the secreted. The catalysed reaction is Eliminative cleavage of (1-&gt;4)-alpha-D-galacturonan to give oligosaccharides with 4-deoxy-alpha-D-galact-4-enuronosyl groups at their non-reducing ends.. It functions in the pathway glycan metabolism; pectin degradation; 2-dehydro-3-deoxy-D-gluconate from pectin: step 2/5. Its function is as follows. Involved in maceration and soft-rotting of plant tissue. The protein is Pectate lyase 3 (pel3) of Pectobacterium carotovorum subsp. carotovorum (Erwinia carotovora subsp. carotovora).